A 245-amino-acid polypeptide reads, in one-letter code: uncharacterized protein (245 aa).

The N-terminal stretch at 1–20 (MIKQTIVALLLSVGASSVFA) is a signal peptide.

To E.coli YmcB.

This is an uncharacterized protein from Escherichia coli (strain K12).